The sequence spans 595 residues: MHRYRSHTCAALRKSDVGSTVRLSGWVHRVRDHGGVLFIDLRDHYGMTQVVADPDSPAFKAAETVRGEWVIRVDGAVKARTDETVNRNMPTGEVELYAREIEVLSAAKELPLPVFGEPDYPEDVRLKYRFLDLRRETLHKNIVRRTEIIAAMRRRMSDIGFTEYTTPILTASSPEGARDFLVPSRIHPGNFYALPQAPQQYKQLLMVAGFDRYFQIAPCFRDEDPRADRLPGEFYQLDLEMSFVEQEDVWDAMEPMIRAIFADFAGGKPVTDKFPRIPYDAAIRKYGSDKPDLRNPIEMQEVTEHFAGSGFKVFANMIASNPKVEIWAIPAKTGGSRAFCDRMNAWAQSQGQPGLGYIFWRKEGEKLEGAGPLAKNIGEERTDAIRTQLGLGDGDACFFVAGEPAKFYKFAGEARTRAGEELNLVDRERYELCWIVDFPFYEWNEEEKRVDFAHNPFSMPQGGLTALSSDDLLSIKAFQYDMVCNGFEIASGSIRNQSPELMVKAFENVGLSQADVEERFGGLYRAFQYGAPPHGGMAFGIDRIVMLLVGAKNLREISLFPMNQQAQDLLMGAPSPAEPAQLRELAIRPVPQKKD.

An L-aspartate-binding site is contributed by Glu-175. The interval 199–202 (QQYK) is aspartate. Residues Arg-221 and His-454 each contribute to the L-aspartate site. 221–223 (RDE) lines the ATP pocket. Glu-488 contacts ATP. Arg-495 contacts L-aspartate. 540–543 (GIDR) serves as a coordination point for ATP.

It belongs to the class-II aminoacyl-tRNA synthetase family. Type 1 subfamily. As to quaternary structure, homodimer.

It localises to the cytoplasm. It carries out the reaction tRNA(Asx) + L-aspartate + ATP = L-aspartyl-tRNA(Asx) + AMP + diphosphate. In terms of biological role, aspartyl-tRNA synthetase with relaxed tRNA specificity since it is able to aspartylate not only its cognate tRNA(Asp) but also tRNA(Asn). Reaction proceeds in two steps: L-aspartate is first activated by ATP to form Asp-AMP and then transferred to the acceptor end of tRNA(Asp/Asn). This is Aspartate--tRNA(Asp/Asn) ligase from Sinorhizobium medicae (strain WSM419) (Ensifer medicae).